Consider the following 163-residue polypeptide: Phosphopantetheine adenylyltransferase (163 aa).

Residue Thr-10 participates in substrate binding. Residues 10–11 and His-18 each bind ATP; that span reads TF. Substrate-binding residues include Lys-42, Leu-74, and Arg-88. ATP is bound by residues 89 to 91, Glu-99, and 124 to 130; these read GLR and NSFISST.

Belongs to the bacterial CoaD family. As to quaternary structure, homohexamer. It depends on Mg(2+) as a cofactor.

The protein resides in the cytoplasm. The enzyme catalyses (R)-4'-phosphopantetheine + ATP + H(+) = 3'-dephospho-CoA + diphosphate. It functions in the pathway cofactor biosynthesis; coenzyme A biosynthesis; CoA from (R)-pantothenate: step 4/5. In terms of biological role, reversibly transfers an adenylyl group from ATP to 4'-phosphopantetheine, yielding dephospho-CoA (dPCoA) and pyrophosphate. The sequence is that of Phosphopantetheine adenylyltransferase from Shewanella sp. (strain MR-4).